The primary structure comprises 362 residues: Phenylalanine--tRNA ligase alpha subunit (362 aa).

Glu-263 is a Mg(2+) binding site.

This sequence belongs to the class-II aminoacyl-tRNA synthetase family. Phe-tRNA synthetase alpha subunit type 1 subfamily. In terms of assembly, tetramer of two alpha and two beta subunits. Requires Mg(2+) as cofactor.

The protein resides in the cytoplasm. It carries out the reaction tRNA(Phe) + L-phenylalanine + ATP = L-phenylalanyl-tRNA(Phe) + AMP + diphosphate + H(+). This chain is Phenylalanine--tRNA ligase alpha subunit, found in Caulobacter sp. (strain K31).